Reading from the N-terminus, the 184-residue chain is Lipoprotein signal peptidase (184 aa).

Helical transmembrane passes span Phe-23–Phe-43, Pro-88–Phe-108, and Thr-110–Phe-130. Active-site residues include Asp-142 and Asp-157. Residues Ala-156–Phe-176 traverse the membrane as a helical segment.

It belongs to the peptidase A8 family.

Its subcellular location is the cell membrane. It carries out the reaction Release of signal peptides from bacterial membrane prolipoproteins. Hydrolyzes -Xaa-Yaa-Zaa-|-(S,diacylglyceryl)Cys-, in which Xaa is hydrophobic (preferably Leu), and Yaa (Ala or Ser) and Zaa (Gly or Ala) have small, neutral side chains.. Its pathway is protein modification; lipoprotein biosynthesis (signal peptide cleavage). This protein specifically catalyzes the removal of signal peptides from prolipoproteins. In Mycoplasma pneumoniae (strain ATCC 29342 / M129 / Subtype 1) (Mycoplasmoides pneumoniae), this protein is Lipoprotein signal peptidase.